The primary structure comprises 165 residues: UPF0303 protein Bxeno_A1932 (165 aa).

This sequence belongs to the UPF0303 family.

The chain is UPF0303 protein Bxeno_A1932 from Paraburkholderia xenovorans (strain LB400).